We begin with the raw amino-acid sequence, 286 residues long: tRNA (guanine-N(7)-)-methyltransferase (286 aa).

S-adenosyl-L-methionine-binding positions include Gly91, 114–115 (EI), 158–159 (NS), and Leu178. Residue Asp181 is part of the active site. S-adenosyl-L-methionine is bound at residue 256–258 (TEE).

Belongs to the class I-like SAM-binding methyltransferase superfamily. TrmB family. In terms of assembly, forms a complex with TRM82.

The protein localises to the nucleus. It catalyses the reaction guanosine(46) in tRNA + S-adenosyl-L-methionine = N(7)-methylguanosine(46) in tRNA + S-adenosyl-L-homocysteine. Its pathway is tRNA modification; N(7)-methylguanine-tRNA biosynthesis. Its function is as follows. Catalyzes the formation of N(7)-methylguanine at position 46 (m7G46) in tRNA. This chain is tRNA (guanine-N(7)-)-methyltransferase, found in Cryptococcus neoformans var. neoformans serotype D (strain B-3501A) (Filobasidiella neoformans).